The chain runs to 304 residues: Quinolinate synthase (304 aa).

Residues His23 and Ser40 each contribute to the iminosuccinate site. Cys85 lines the [4Fe-4S] cluster pocket. Iminosuccinate is bound by residues 111–113 and Ser128; that span reads YVN. Cys171 lines the [4Fe-4S] cluster pocket. Iminosuccinate-binding positions include 197–199 and Thr214; that span reads HPE. Cys259 is a binding site for [4Fe-4S] cluster.

The protein belongs to the quinolinate synthase family. Type 2 subfamily. [4Fe-4S] cluster serves as cofactor.

Its subcellular location is the cytoplasm. It carries out the reaction iminosuccinate + dihydroxyacetone phosphate = quinolinate + phosphate + 2 H2O + H(+). It participates in cofactor biosynthesis; NAD(+) biosynthesis; quinolinate from iminoaspartate: step 1/1. Functionally, catalyzes the condensation of iminoaspartate with dihydroxyacetone phosphate to form quinolinate. In Pelobacter propionicus (strain DSM 2379 / NBRC 103807 / OttBd1), this protein is Quinolinate synthase.